A 266-amino-acid polypeptide reads, in one-letter code: Undecaprenyl-diphosphatase (266 aa).

Transmembrane regions (helical) follow at residues Met-1–Ile-21, Gln-39–Phe-59, Ser-83–Leu-103, Leu-111–Ala-131, Thr-144–Thr-164, Ala-183–Met-203, Ser-218–Leu-238, and Met-246–Met-266.

This sequence belongs to the UppP family.

The protein resides in the cell inner membrane. It carries out the reaction di-trans,octa-cis-undecaprenyl diphosphate + H2O = di-trans,octa-cis-undecaprenyl phosphate + phosphate + H(+). In terms of biological role, catalyzes the dephosphorylation of undecaprenyl diphosphate (UPP). Confers resistance to bacitracin. The polypeptide is Undecaprenyl-diphosphatase (Shewanella woodyi (strain ATCC 51908 / MS32)).